Consider the following 438-residue polypeptide: Methylenetetrahydrofolate--tRNA-(uracil-5-)-methyltransferase TrmFO (438 aa).

An FAD-binding site is contributed by 9–14 (GAGLAG).

It belongs to the MnmG family. TrmFO subfamily. The cofactor is FAD.

The protein resides in the cytoplasm. It carries out the reaction uridine(54) in tRNA + (6R)-5,10-methylene-5,6,7,8-tetrahydrofolate + NADH + H(+) = 5-methyluridine(54) in tRNA + (6S)-5,6,7,8-tetrahydrofolate + NAD(+). It catalyses the reaction uridine(54) in tRNA + (6R)-5,10-methylene-5,6,7,8-tetrahydrofolate + NADPH + H(+) = 5-methyluridine(54) in tRNA + (6S)-5,6,7,8-tetrahydrofolate + NADP(+). In terms of biological role, catalyzes the folate-dependent formation of 5-methyl-uridine at position 54 (M-5-U54) in all tRNAs. This Lactobacillus acidophilus (strain ATCC 700396 / NCK56 / N2 / NCFM) protein is Methylenetetrahydrofolate--tRNA-(uracil-5-)-methyltransferase TrmFO.